We begin with the raw amino-acid sequence, 252 residues long: Chlorophyll a-b binding protein P4, chloroplastic (252 aa).

Tryptophan 56 provides a ligand contact to chlorophyll b. 2 residues coordinate chlorophyll a: phenylalanine 76 and glutamate 95. Arginine 100 lines the chlorophyll b pocket. 2 consecutive transmembrane segments (helical) span residues 101–121 (WAMLGVAGMLLPEVFTSIGII) and 134–154 (YFASSSTLFVIEFILSHYVEI). Chlorophyll b is bound by residues serine 137, valine 143, glutamate 153, and arginine 156. Residues lysine 203, glutamate 204, asparagine 207, arginine 209, glutamine 221, and histidine 236 each contribute to the chlorophyll a site.

Belongs to the light-harvesting chlorophyll a/b-binding (LHC) protein family. The LHC complex consists of chlorophyll a-b binding proteins. Binds at least 14 chlorophylls (8 Chl-a and 6 Chl-b) and carotenoids such as lutein and neoxanthin. serves as cofactor. In terms of processing, photoregulated by reversible phosphorylation of its threonine residues.

It is found in the plastid. Its subcellular location is the chloroplast thylakoid membrane. The light-harvesting complex (LHC) functions as a light receptor, it captures and delivers excitation energy to photosystems with which it is closely associated. Functionally, may channel protons produced in the catalytic Mn center of water oxidation into the thylakoid lumen. This is Chlorophyll a-b binding protein P4, chloroplastic from Pisum sativum (Garden pea).